A 222-amino-acid polypeptide reads, in one-letter code: Adenylate kinase (222 aa).

Residue Ser-2 is a propeptide, removed in mature form. 2 positions are modified to N-acetylserine: Ser-2 and Ser-3. Gly-16–Thr-21 contributes to the ATP binding site. The NMP stretch occupies residues Ala-36 to Val-65. AMP is bound by residues Thr-37, Arg-42, Gly-63–Val-65, Gly-92–Arg-95, and Gln-99. The LID stretch occupies residues Gly-133–Asp-170. Residues Arg-134 and Ser-143–Tyr-144 each bind ATP. Residues Arg-167 and Arg-178 each coordinate AMP. ATP is bound at residue Gln-206.

This sequence belongs to the adenylate kinase family. AK2 subfamily. Monomer.

The protein resides in the cytoplasm. It is found in the cytosol. The protein localises to the mitochondrion intermembrane space. The enzyme catalyses AMP + ATP = 2 ADP. Its function is as follows. Catalyzes the reversible transfer of the terminal phosphate group between ATP and AMP. Plays an important role in cellular energy homeostasis and in adenine nucleotide metabolism. Adenylate kinase activity is critical for regulation of the phosphate utilization and the AMP de novo biosynthesis pathways. The chain is Adenylate kinase from Saccharomyces cerevisiae (strain RM11-1a) (Baker's yeast).